A 281-amino-acid polypeptide reads, in one-letter code: Glutamate racemase (281 aa).

Residues 10–11 (DS) and 42–43 (YG) contribute to the substrate site. Cys74 (proton donor/acceptor) is an active-site residue. A substrate-binding site is contributed by 75-76 (NT). Cys190 (proton donor/acceptor) is an active-site residue. Substrate is bound at residue 191-192 (TH).

This sequence belongs to the aspartate/glutamate racemases family.

It catalyses the reaction L-glutamate = D-glutamate. It functions in the pathway cell wall biogenesis; peptidoglycan biosynthesis. In terms of biological role, provides the (R)-glutamate required for cell wall biosynthesis. The chain is Glutamate racemase from Oenococcus oeni (strain ATCC BAA-331 / PSU-1).